Reading from the N-terminus, the 92-residue chain is MSDHYHYPLDVSWSTEEITSVLHFLNQVELAYEAKVGAEELLKSYAAYKEIVRSKSQEKQIDREFQQASGYSTYQAVKKAREIEKGFFSLGR.

The protein belongs to the UPF0223 family.

The sequence is that of UPF0223 protein SZO_10560 from Streptococcus equi subsp. zooepidemicus (strain H70).